Reading from the N-terminus, the 142-residue chain is Large ribosomal subunit protein mL42 (142 aa).

The transit peptide at M1–H32 directs the protein to the mitochondrion.

The protein belongs to the mitochondrion-specific ribosomal protein mL42 family. As to quaternary structure, component of the mitochondrial large ribosomal subunit (mt-LSU). Mature mammalian 55S mitochondrial ribosomes consist of a small (28S) and a large (39S) subunit. The 28S small subunit contains a 12S ribosomal RNA (12S mt-rRNA) and 30 different proteins. The 39S large subunit contains a 16S rRNA (16S mt-rRNA), a copy of mitochondrial valine transfer RNA (mt-tRNA(Val)), which plays an integral structural role, and 52 different proteins.

It is found in the mitochondrion. This chain is Large ribosomal subunit protein mL42 (MRPL42), found in Homo sapiens (Human).